Consider the following 1321-residue polypeptide: Serine/threonine-protein kinase SIK3 (1321 aa).

The segment at 1-59 (MAAAAASGAGGAAGAGTGGAGPAGRLLPPPAPGSPAAPAAVSPAAGQPRPPAPASRGPM) is disordered. Residues 8 to 22 (GAGGAAGAGTGGAGP) show a composition bias toward gly residues. A compositionally biased stretch (low complexity) spans 36 to 47 (AAPAAVSPAAGQ). Residues 66–317 (YEIDRTIGKG…MEQICKHKWM (252 aa)) form the Protein kinase domain. Threonine 71 is subject to Phosphothreonine. ATP-binding positions include 72–80 (IGKGNFAVV) and lysine 95. The residue at position 113 (glutamate 113) is a Phosphothreonine. The Proton acceptor role is filled by aspartate 188. Residue threonine 221 is modified to Phosphothreonine; by LKB1. The region spanning 344–384 (PLNEDVLLAMEDMGLDKEQTLQSLRSDAYDHYSAIYSLLCD) is the UBA domain. At threonine 469 the chain carries Phosphothreonine. Phosphoserine is present on residues serine 551, serine 591, and serine 592. Positions 585–614 (TPVDEESSDGEPDQEAVQSSTYKDSNTLHL) are disordered. Residues 587 to 598 (VDEESSDGEPDQ) are compositionally biased toward acidic residues. Residues 600–613 (AVQSSTYKDSNTLH) are compositionally biased toward polar residues. Residues serine 626 and serine 647 each carry the phosphoserine modification. Residues 727-772 (IQPSSPPPNHPNNHLFRQPSNSPPPMSSAMIQPHGAASSSQFQGLP) are disordered. Polar residues predominate over residues 763-772 (ASSSQFQGLP). Serine 866 bears the Phosphoserine mark. The segment at 894-945 (LFSDQSRGSPSSYSPSTGVGFSPTQALKVPPLDQFPTFPPSAHQQPPHYTTS) is disordered. The segment covering 896–909 (SDQSRGSPSSYSPS) has biased composition (low complexity). Positions 935–945 (AHQQPPHYTTS) are enriched in polar residues. Serine 978 bears the Phosphoserine mark. Arginine 986 carries the omega-N-methylarginine modification. Residues 1256 to 1265 (SLMGSQQFQD) show a composition bias toward polar residues. The segment at 1256 to 1289 (SLMGSQQFQDGENEECGASLGGHEHPDLSDGSQH) is disordered.

The protein belongs to the protein kinase superfamily. CAMK Ser/Thr protein kinase family. SNF1 subfamily. As to quaternary structure, binds to and is activated by YWHAZ when phosphorylated on Thr-221. Interacts with 14-3-3 proteins. Interacts with HDAC4; this interaction leads to HDAC4 retention in the cytoplasm. Interacts with DEPTOR, MLST8/GbetaL, RICTOR and RPTOR. Requires Mg(2+) as cofactor. In terms of processing, phosphorylated at Thr-221 by STK11/LKB1 in complex with STE20-related adapter-alpha (STRADA) pseudo kinase and CAB39. Phosphorylation at Thr-221 is inhibited in response to PTHLH/PTHrP. Phosphorylated at Thr-469 and Ser-551 in response to cAMP signaling. In terms of tissue distribution, expressed in chondrocytes.

The protein localises to the cytoplasm. It catalyses the reaction L-seryl-[protein] + ATP = O-phospho-L-seryl-[protein] + ADP + H(+). The catalysed reaction is L-threonyl-[protein] + ATP = O-phospho-L-threonyl-[protein] + ADP + H(+). Its activity is regulated as follows. Activated by phosphorylation on Thr-221. Its function is as follows. Positive regulator of mTOR signaling that functions by triggering the degradation of DEPTOR, an mTOR inhibitor. Involved in the dynamic regulation of mTOR signaling in chondrocyte differentiation during skeletogenesis. Negatively regulates cAMP signaling pathway possibly by acting on CRTC2/TORC2 and CRTC3/TORC3. Prevents HDAC4 translocation to the nucleus. This Homo sapiens (Human) protein is Serine/threonine-protein kinase SIK3.